The following is a 107-amino-acid chain: Nucleoid-associated protein XF_1808 (107 aa).

Belongs to the YbaB/EbfC family. Homodimer.

Its subcellular location is the cytoplasm. The protein resides in the nucleoid. Its function is as follows. Binds to DNA and alters its conformation. May be involved in regulation of gene expression, nucleoid organization and DNA protection. The polypeptide is Nucleoid-associated protein XF_1808 (Xylella fastidiosa (strain 9a5c)).